We begin with the raw amino-acid sequence, 367 residues long: Alanine racemase (367 aa).

Lys-40 functions as the Proton acceptor; specific for D-alanine in the catalytic mechanism. An N6-(pyridoxal phosphate)lysine modification is found at Lys-40. Arg-136 serves as a coordination point for substrate. Tyr-263 functions as the Proton acceptor; specific for L-alanine in the catalytic mechanism. Substrate is bound at residue Met-310.

Belongs to the alanine racemase family. It depends on pyridoxal 5'-phosphate as a cofactor.

It catalyses the reaction L-alanine = D-alanine. It participates in amino-acid biosynthesis; D-alanine biosynthesis; D-alanine from L-alanine: step 1/1. Functionally, catalyzes the interconversion of L-alanine and D-alanine. May also act on other amino acids. The sequence is that of Alanine racemase (alr) from Streptococcus thermophilus (strain ATCC BAA-491 / LMD-9).